We begin with the raw amino-acid sequence, 1358 residues long: Phosphoribosylformylglycinamidine synthase (1358 aa).

An N-acetylthreonine modification is found at Thr-2. Positions 339–363 are disordered; sequence AVSPFPGAATGSGGEIRDEGATGRG. ATP is bound by residues 345–356, 424–426, and Ala-719; these read GAATGSGGEIRD and NGY. Mg(2+) is bound by residues Asp-720, Glu-762, Asn-766, and Asp-930. Residue Ser-932 coordinates ATP. In terms of domain architecture, Glutamine amidotransferase type-1 spans 1093 to 1358; the sequence is VAILREQGVN…LFRSARRWVG (266 aa). Catalysis depends on Cys-1187, which acts as the Nucleophile. Catalysis depends on residues His-1319 and Glu-1321.

The protein in the N-terminal section; belongs to the FGAMS family.

It is found in the cytoplasm. The catalysed reaction is N(2)-formyl-N(1)-(5-phospho-beta-D-ribosyl)glycinamide + L-glutamine + ATP + H2O = 2-formamido-N(1)-(5-O-phospho-beta-D-ribosyl)acetamidine + L-glutamate + ADP + phosphate + H(+). It participates in purine metabolism; IMP biosynthesis via de novo pathway; 5-amino-1-(5-phospho-D-ribosyl)imidazole from N(2)-formyl-N(1)-(5-phospho-D-ribosyl)glycinamide: step 1/2. Its function is as follows. Phosphoribosylformylglycinamidine synthase involved in the purines biosynthetic pathway. Catalyzes the ATP-dependent conversion of formylglycinamide ribonucleotide (FGAR) and glutamine to yield formylglycinamidine ribonucleotide (FGAM) and glutamate. This is Phosphoribosylformylglycinamidine synthase (ADE6) from Saccharomyces cerevisiae (strain ATCC 204508 / S288c) (Baker's yeast).